The chain runs to 637 residues: Chaperone protein HtpG (637 aa).

Residues 1–345 (MSQQETHGFQ…SNDLPLNVSR (345 aa)) form an a; substrate-binding region. Positions 346-562 (EILQDNHITK…EGEMSTQMIK (217 aa)) are b. Positions 563-637 (LMQAAGQPVP…MNQMLLANMK (75 aa)) are c.

It belongs to the heat shock protein 90 family. In terms of assembly, homodimer.

The protein resides in the cytoplasm. Functionally, molecular chaperone. Has ATPase activity. This is Chaperone protein HtpG from Shewanella sp. (strain W3-18-1).